We begin with the raw amino-acid sequence, 303 residues long: MSNKLTFQEIILTLQQYWNDQGCMLMQAYDNEKGAGTMSPYTFLRAIGPEPWNAAYVEPSRRPADGRYGENPNRLYQHHQFQVVMKPSPSNIQELYLQSLERLGIDPLEHDIRFVEDNWENPSTGSAGLGWEVWLDGMEITQFTYFQQVGGLATSPVTAEVTYGLERLASYIQEVDSVYDIEWAPGVKYGEIFLQPEYEHSKYSFEVSNQDMLLENFETFEKEAERALAQGLVHPAYDYVLKCSHTFNLLDARGAVSVTERAGYIARIRHLARSVAKTFVAERKKLGFPLLDDASRVALLAED.

The protein belongs to the class-II aminoacyl-tRNA synthetase family. In terms of assembly, tetramer of two alpha and two beta subunits.

The protein localises to the cytoplasm. It carries out the reaction tRNA(Gly) + glycine + ATP = glycyl-tRNA(Gly) + AMP + diphosphate. The sequence is that of Glycine--tRNA ligase alpha subunit from Streptococcus equi subsp. zooepidemicus (strain H70).